The following is a 103-amino-acid chain: Small ribosomal subunit protein uS10 (103 aa).

The protein belongs to the universal ribosomal protein uS10 family. Part of the 30S ribosomal subunit.

Its function is as follows. Involved in the binding of tRNA to the ribosomes. This Colwellia psychrerythraea (strain 34H / ATCC BAA-681) (Vibrio psychroerythus) protein is Small ribosomal subunit protein uS10.